A 449-amino-acid chain; its full sequence is Tubulin beta chain (449 aa).

Residues glutamine 11, glutamate 69, serine 138, glycine 142, threonine 143, glycine 144, asparagine 204, and asparagine 226 each contribute to the GTP site. Glutamate 69 contributes to the Mg(2+) binding site. Residues glutamine 426–alanine 449 are disordered. Residues threonine 429–alanine 449 show a composition bias toward acidic residues.

Belongs to the tubulin family. As to quaternary structure, dimer of alpha and beta chains. A typical microtubule is a hollow water-filled tube with an outer diameter of 25 nm and an inner diameter of 15 nM. Alpha-beta heterodimers associate head-to-tail to form protofilaments running lengthwise along the microtubule wall with the beta-tubulin subunit facing the microtubule plus end conferring a structural polarity. Microtubules usually have 13 protofilaments but different protofilament numbers can be found in some organisms and specialized cells. Mg(2+) serves as cofactor.

It localises to the cytoplasm. The protein resides in the cytoskeleton. Functionally, tubulin is the major constituent of microtubules, a cylinder consisting of laterally associated linear protofilaments composed of alpha- and beta-tubulin heterodimers. Microtubules grow by the addition of GTP-tubulin dimers to the microtubule end, where a stabilizing cap forms. Below the cap, tubulin dimers are in GDP-bound state, owing to GTPase activity of alpha-tubulin. This chain is Tubulin beta chain, found in Toxoplasma gondii.